The sequence spans 547 residues: NADH-ubiquinone oxidoreductase chain 5 (547 aa).

15 consecutive transmembrane segments (helical) span residues 3 to 23 (ISIF…IFFV), 45 to 65 (YFNS…VLVF), 80 to 100 (YFML…SGCF), 101 to 121 (SMLV…LFYN), 132 to 152 (TVLT…STIF), 198 to 218 (ISSL…IMNF), 227 to 247 (VIMI…MAAL), 264 to 284 (MGFS…IHLL), 319 to 339 (VPYF…GLVF), 352 to 372 (FFFS…SVFL), 399 to 419 (VVMN…IWWM), 430 to 450 (FLYV…VVGF), 460 to 477 (FVYK…VYGL), 485 to 505 (LFLG…GFWS), and 512 to 532 (LYFN…WGCI).

This sequence belongs to the complex I subunit 5 family.

It localises to the mitochondrion inner membrane. The catalysed reaction is a ubiquinone + NADH + 5 H(+)(in) = a ubiquinol + NAD(+) + 4 H(+)(out). Functionally, core subunit of the mitochondrial membrane respiratory chain NADH dehydrogenase (Complex I) that is believed to belong to the minimal assembly required for catalysis. Complex I functions in the transfer of electrons from NADH to the respiratory chain. The immediate electron acceptor for the enzyme is believed to be ubiquinone. The polypeptide is NADH-ubiquinone oxidoreductase chain 5 (ND5) (Ascaris suum (Pig roundworm)).